We begin with the raw amino-acid sequence, 287 residues long: Glycine--tRNA ligase alpha subunit (287 aa).

The protein belongs to the class-II aminoacyl-tRNA synthetase family. Tetramer of two alpha and two beta subunits.

Its subcellular location is the cytoplasm. The enzyme catalyses tRNA(Gly) + glycine + ATP = glycyl-tRNA(Gly) + AMP + diphosphate. The sequence is that of Glycine--tRNA ligase alpha subunit from Petrotoga mobilis (strain DSM 10674 / SJ95).